Here is a 409-residue protein sequence, read N- to C-terminus: Argininosuccinate synthase (409 aa).

ATP-binding positions include 10-18 (AYSGGLDTS) and Ala37. Residues Tyr90 and Ser95 each contribute to the L-citrulline site. Residue Gly120 coordinates ATP. Thr122, Asn126, and Asp127 together coordinate L-aspartate. Asn126 provides a ligand contact to L-citrulline. Positions 130, 182, 191, 267, and 279 each coordinate L-citrulline.

This sequence belongs to the argininosuccinate synthase family. Type 1 subfamily. In terms of assembly, homotetramer.

It is found in the cytoplasm. It carries out the reaction L-citrulline + L-aspartate + ATP = 2-(N(omega)-L-arginino)succinate + AMP + diphosphate + H(+). Its pathway is amino-acid biosynthesis; L-arginine biosynthesis; L-arginine from L-ornithine and carbamoyl phosphate: step 2/3. This Aromatoleum aromaticum (strain DSM 19018 / LMG 30748 / EbN1) (Azoarcus sp. (strain EbN1)) protein is Argininosuccinate synthase.